The primary structure comprises 487 residues: NADH-quinone oxidoreductase subunit N (487 aa).

13 helical membrane-spanning segments follow: residues 9-29 (PVLP…LGVF), 38-58 (VSVL…SLGG), 73-93 (FAGF…AMSL), 108-128 (VLVL…DFIA), 161-181 (FVLG…LYGF), 208-228 (IIAG…AVPF), 240-260 (PTPV…CLLV), 277-297 (VVTF…VVQT), 306-326 (SSIG…TLGI), 328-348 (GVLI…AVIL), 374-394 (AFVM…AGFW), 408-430 (LYTL…LRIV), and 452-472 (LVMA…APLV).

This sequence belongs to the complex I subunit 2 family. As to quaternary structure, NDH-1 is composed of 14 different subunits. Subunits NuoA, H, J, K, L, M, N constitute the membrane sector of the complex.

It is found in the cell inner membrane. It carries out the reaction a quinone + NADH + 5 H(+)(in) = a quinol + NAD(+) + 4 H(+)(out). Its function is as follows. NDH-1 shuttles electrons from NADH, via FMN and iron-sulfur (Fe-S) centers, to quinones in the respiratory chain. The immediate electron acceptor for the enzyme in this species is believed to be ubiquinone. Couples the redox reaction to proton translocation (for every two electrons transferred, four hydrogen ions are translocated across the cytoplasmic membrane), and thus conserves the redox energy in a proton gradient. The polypeptide is NADH-quinone oxidoreductase subunit N (Paramagnetospirillum magneticum (strain ATCC 700264 / AMB-1) (Magnetospirillum magneticum)).